Here is a 233-residue protein sequence, read N- to C-terminus: Large ribosomal subunit protein uL1 (233 aa).

Belongs to the universal ribosomal protein uL1 family. Part of the 50S ribosomal subunit.

Binds directly to 23S rRNA. The L1 stalk is quite mobile in the ribosome, and is involved in E site tRNA release. Its function is as follows. Protein L1 is also a translational repressor protein, it controls the translation of the L11 operon by binding to its mRNA. The polypeptide is Large ribosomal subunit protein uL1 (Geobacillus sp. (strain WCH70)).